The primary structure comprises 313 residues: 4-hydroxy-3-methylbut-2-enyl diphosphate reductase (313 aa).

Position 14 (C14) interacts with [4Fe-4S] cluster. The (2E)-4-hydroxy-3-methylbut-2-enyl diphosphate site is built by H43 and H76. Residues H43 and H76 each coordinate dimethylallyl diphosphate. H43 and H76 together coordinate isopentenyl diphosphate. C98 is a [4Fe-4S] cluster binding site. H126 is a (2E)-4-hydroxy-3-methylbut-2-enyl diphosphate binding site. A dimethylallyl diphosphate-binding site is contributed by H126. H126 is an isopentenyl diphosphate binding site. The active-site Proton donor is E128. T166 provides a ligand contact to (2E)-4-hydroxy-3-methylbut-2-enyl diphosphate. [4Fe-4S] cluster is bound at residue C196. Positions 224, 225, 226, and 269 each coordinate (2E)-4-hydroxy-3-methylbut-2-enyl diphosphate. 4 residues coordinate dimethylallyl diphosphate: S224, S225, N226, and S269. Positions 224, 225, 226, and 269 each coordinate isopentenyl diphosphate.

The protein belongs to the IspH family. [4Fe-4S] cluster is required as a cofactor.

It catalyses the reaction isopentenyl diphosphate + 2 oxidized [2Fe-2S]-[ferredoxin] + H2O = (2E)-4-hydroxy-3-methylbut-2-enyl diphosphate + 2 reduced [2Fe-2S]-[ferredoxin] + 2 H(+). It carries out the reaction dimethylallyl diphosphate + 2 oxidized [2Fe-2S]-[ferredoxin] + H2O = (2E)-4-hydroxy-3-methylbut-2-enyl diphosphate + 2 reduced [2Fe-2S]-[ferredoxin] + 2 H(+). It functions in the pathway isoprenoid biosynthesis; dimethylallyl diphosphate biosynthesis; dimethylallyl diphosphate from (2E)-4-hydroxy-3-methylbutenyl diphosphate: step 1/1. The protein operates within isoprenoid biosynthesis; isopentenyl diphosphate biosynthesis via DXP pathway; isopentenyl diphosphate from 1-deoxy-D-xylulose 5-phosphate: step 6/6. In terms of biological role, catalyzes the conversion of 1-hydroxy-2-methyl-2-(E)-butenyl 4-diphosphate (HMBPP) into a mixture of isopentenyl diphosphate (IPP) and dimethylallyl diphosphate (DMAPP). Acts in the terminal step of the DOXP/MEP pathway for isoprenoid precursor biosynthesis. The chain is 4-hydroxy-3-methylbut-2-enyl diphosphate reductase from Tropheryma whipplei (strain TW08/27) (Whipple's bacillus).